A 306-amino-acid polypeptide reads, in one-letter code: Glutaminase (306 aa).

7 residues coordinate substrate: S64, N115, E159, N166, Y190, Y242, and V260.

The protein belongs to the glutaminase family. In terms of assembly, homotetramer.

It catalyses the reaction L-glutamine + H2O = L-glutamate + NH4(+). This is Glutaminase from Vibrio vulnificus (strain YJ016).